We begin with the raw amino-acid sequence, 1858 residues long: Nucleoporin NUP188 (1858 aa).

It belongs to the Nup188 family. In terms of assembly, component of the nuclear pore complex (NPC). NPC constitutes the exclusive means of nucleocytoplasmic transport. NPCs allow the passive diffusion of ions and small molecules and the active, nuclear transport receptor-mediated bidirectional transport of macromolecules such as proteins, RNAs, ribonucleoparticles (RNPs), and ribosomal subunits across the nuclear envelope. Due to its 8-fold rotational symmetry, all subunits are present with 8 copies or multiples thereof. Part of a tetrameric NUP188-NUP170-NIC96-NUP53 module.

The protein resides in the nucleus. It localises to the nuclear pore complex. Its subcellular location is the nucleus membrane. Functionally, functions as a component of the nuclear pore complex (NPC). NPC components, collectively referred to as nucleoporins (NUPs), can play the role of both NPC structural components and of docking or interaction partners for transiently associated nuclear transport factors. NUP188 probably plays an important role in NPC assembly and organization. The sequence is that of Nucleoporin NUP188 (NUP188) from Chaetomium thermophilum (strain DSM 1495 / CBS 144.50 / IMI 039719) (Thermochaetoides thermophila).